The primary structure comprises 288 residues: 3'-5' exonuclease (288 aa).

The interval 30-67 (RSSSSSSSAAPTVQATTSVHGHEEDPNQIPNNIRRQLP) is disordered. Polar residues-rich tracts occupy residues 38 to 48 (AAPTVQATTSV) and 57 to 67 (QIPNNIRRQLP). Residues 129–279 (FVGLDIEWRP…ASWHLYKVLK (151 aa)) enclose the 3'-5' exonuclease domain.

In terms of assembly, interacts with KU70 and KU80. Interacts with RECQL2. It depends on Mg(2+) as a cofactor. Mn(2+) serves as cofactor. As to expression, expressed ubiquitously.

Its subcellular location is the nucleus. Activated upon interaction with the KU heterodimer. Not stimulated by ATP. Its function is as follows. Exonuclease that digests recessed strands of DNA duplexes in the 3' to 5' direction but hardly single-stranded DNA or blunt-ended duplexes. Also able to digest 3'-protruding strands and 3'-recessed strand termini of duplexes containing mismatched bases. The chain is 3'-5' exonuclease (WEX) from Arabidopsis thaliana (Mouse-ear cress).